The primary structure comprises 79 residues: Small ribosomal subunit protein bS18 (79 aa).

Belongs to the bacterial ribosomal protein bS18 family. In terms of assembly, part of the 30S ribosomal subunit. Forms a tight heterodimer with protein bS6.

Its function is as follows. Binds as a heterodimer with protein bS6 to the central domain of the 16S rRNA, where it helps stabilize the platform of the 30S subunit. The sequence is that of Small ribosomal subunit protein bS18 from Streptococcus pyogenes serotype M49 (strain NZ131).